A 325-amino-acid polypeptide reads, in one-letter code: ADP-ribose glycohydrolase MACROD1 (325 aa).

N6-succinyllysine is present on residues lysine 96, lysine 103, and lysine 129. Residue lysine 138 forms a Glycyl lysine isopeptide (Lys-Gly) (interchain with G-Cter in SUMO2) linkage. Positions 141 to 322 constitute a Macro domain; the sequence is EPRYKKDKQL…IYRSRLPHYF (182 aa). 159 to 161 provides a ligand contact to substrate; sequence SDI. Lysine 163 is subject to N6-acetyllysine. Substrate is bound by residues 172-174, 179-184, 267-273, and phenylalanine 306; these read AAN, GGGGVD, and ISTGVFG.

It belongs to the MacroD-type family. MacroD1/2-like subfamily. In terms of assembly, interacts with ESR1; Interacts in a manner that is estrogen independent but is enhanced by estrogen. Interacts (via macro domain) with AR.

The protein resides in the nucleus. The enzyme catalyses 3''-O-acetyl-ADP-D-ribose + H2O = ADP-D-ribose + acetate + H(+). It carries out the reaction 2''-O-acetyl-ADP-D-ribose + H2O = ADP-D-ribose + acetate + H(+). The catalysed reaction is 4-O-(ADP-D-ribosyl)-L-aspartyl-[protein] + H2O = L-aspartyl-[protein] + ADP-D-ribose + H(+). It catalyses the reaction 5-O-(ADP-D-ribosyl)-L-glutamyl-[protein] + H2O = L-glutamyl-[protein] + ADP-D-ribose + H(+). The enzyme catalyses alpha-NAD(+) + H2O = ADP-D-ribose + nicotinamide + H(+). Its activity is regulated as follows. Subject to competitive inhibition by the product ADP-ribose. Its function is as follows. Removes ADP-ribose from aspartate and glutamate residues in proteins bearing a single ADP-ribose moiety. Inactive towards proteins bearing poly-ADP-ribose. Deacetylates O-acetyl-ADP ribose, a signaling molecule generated by the deacetylation of acetylated lysine residues in histones and other proteins. Plays a role in estrogen signaling. Binds to androgen receptor (AR) and amplifies the transactivation function of AR in response to androgen. May play an important role in carcinogenesis and/or progression of hormone-dependent cancers by feed-forward mechanism that activates ESR1 transactivation. Could be an ESR1 coactivator, providing a positive feedback regulatory loop for ESR1 signal transduction. Could be involved in invasive growth by down-regulating CDH1 in endometrial cancer cells. Enhances ESR1-mediated transcription activity. The polypeptide is ADP-ribose glycohydrolase MACROD1 (Homo sapiens (Human)).